The primary structure comprises 126 residues: Topoisomerase I damage affected protein 8 (126 aa).

One can recognise a PA14 domain in the interval 1–110 (MTGYFLPPQT…VTTVSDDFAG (110 aa)).

This sequence belongs to the flocculin family.

The sequence is that of Topoisomerase I damage affected protein 8 (TDA8) from Saccharomyces cerevisiae (strain ATCC 204508 / S288c) (Baker's yeast).